We begin with the raw amino-acid sequence, 3063 residues long: Genome polyprotein (3063 aa).

Residues 141 to 284 enclose the Peptidase S30 domain; the sequence is KLTEGQMNHL…QSILNSMIQF (144 aa). Catalysis depends on for P1 proteinase activity residues His-192, Asp-201, and Ser-235. The Involved in interaction with stylet and aphid transmission signature appears at 334 to 337; that stretch reads KITC. The Involved in virions binding and aphid transmission signature appears at 592–594; it reads PTK. One can recognise a Peptidase C6 domain in the interval 618-740; it reads LYIAKQGYCY…ESDIKHYRVG (123 aa). Residues Cys-626 and His-699 each act as for helper component proteinase activity in the active site. Positions 1229-1381 constitute a Helicase ATP-binding domain; it reads DIAHSEHLDF…TQQPVKLIVE (153 aa). 1242–1249 lines the ATP pocket; the sequence is GAVGSGKS. The short motif at 1331–1334 is the DECH box element; that stretch reads DECH. In terms of domain architecture, Helicase C-terminal spans 1400–1559; it reads DVVQFGSNVL…NLPVMTGGVS (160 aa). Residues 1884 to 1892 carry the Nuclear localization signal motif; sequence RKKGKGKGT. An O-(5'-phospho-RNA)-tyrosine modification is found at Tyr-1907. The interaction with host EIF4E stretch occupies residues 1949-1964; that stretch reads KMVENDDIEMQALGSN. The Peptidase C4 domain occupies 2032–2250; that stretch reads AKSLMRGLRD…VLWGPLKLKD (219 aa). Active-site for nuclear inclusion protein A activity residues include His-2077, Asp-2112, and Cys-2182. The 125-residue stretch at 2519-2643 folds into the RdRp catalytic domain; sequence WVYCDADGSQ…AVNPEKESIL (125 aa). The disordered stretch occupies residues 2798–2841; that stretch reads NDTIDAGGSNKKDAKPEQGSIQPNPNKGKDKDVNAGTSGTHTVP. At Thr-3046 the chain carries Phosphothreonine.

The protein belongs to the potyviridae genome polyprotein family. Interacts with host eIF4E protein (via cap-binding region); this interaction mediates the translation of the VPg-viral RNA conjugates. Part of a complex that comprises VPg, RNA, host EIF4E and EIF4G; this interaction mediates the translation of the VPg-viral RNA conjugates. Interaction is possible in susceptible hosts but impaired in resistant plants: the VPg of strain LYE84 interacts with tomato eIF4E1 and eIF4E2 as well as with the Capsicum annuum eIF4E1 susceptible allele pvr2(+) but not with resistant alleles pvr2(1), pvr2(2), pvr2(3), pvr2(4), pvr2(5), pvr2(6), pvr2(7), pvr2(8) and pvr2(9), the VPg of strain SON41 interacts with C.annuum eIF4E1 susceptible alleles pvr2(+), pvr2(1), pvr2(2), pvr2(3) and pvr2(4) but not with resistant alleles pvr2(5), pvr2(6), pvr2(7), pvr2(8) and pvr2(9), the VPg of strain LYE90 interacts only with tomato eIF4E1. In terms of processing, VPg is uridylylated by the polymerase and is covalently attached to the 5'-end of the genomic RNA. This uridylylated form acts as a nucleotide-peptide primer for the polymerase. Potyviral RNA is expressed as two polyproteins which undergo post-translational proteolytic processing. Genome polyprotein is processed by NIa-pro, P1 and HC-pro proteinases resulting in the production of at least ten individual proteins. P3N-PIPO polyprotein is cleaved by P1 and HC-pro proteinases resulting in the production of three individual proteins. The P1 proteinase and the HC-pro cleave only their respective C-termini autocatalytically. 6K1 is essential for proper proteolytic separation of P3 from CI.

It localises to the host cytoplasmic vesicle. The protein localises to the host nucleus. It is found in the virion. The catalysed reaction is RNA(n) + a ribonucleoside 5'-triphosphate = RNA(n+1) + diphosphate. The enzyme catalyses Hydrolyzes glutaminyl bonds, and activity is further restricted by preferences for the amino acids in P6 - P1' that vary with the species of potyvirus, e.g. Glu-Xaa-Xaa-Tyr-Xaa-Gln-|-(Ser or Gly) for the enzyme from tobacco etch virus. The natural substrate is the viral polyprotein, but other proteins and oligopeptides containing the appropriate consensus sequence are also cleaved.. It catalyses the reaction Hydrolyzes a Gly-|-Gly bond at its own C-terminus, commonly in the sequence -Tyr-Xaa-Val-Gly-|-Gly, in the processing of the potyviral polyprotein.. In terms of biological role, required for aphid transmission and also has proteolytic activity. Only cleaves a Gly-Gly dipeptide at its own C-terminus. Interacts with virions and aphid stylets. Acts as a suppressor of RNA-mediated gene silencing, also known as post-transcriptional gene silencing (PTGS), a mechanism of plant viral defense that limits the accumulation of viral RNAs. May have RNA-binding activity. Its function is as follows. Has helicase activity. It may be involved in replication. Functionally, indispensable for virus replication. Reduces the abundance of host transcripts related to jasmonic acid biosynthesis therefore altering the host defenses. In order to increase its own stability, decreases host protein degradation pathways. Indispensable for virus replication. In terms of biological role, mediates the cap-independent, EIF4E-dependent translation of viral genomic RNAs. Binds to the cap-binding site of host EIF4E and thus interferes with the host EIF4E-dependent mRNA export and translation. VPg-RNA directly binds EIF4E and is a template for transcription. Also forms trimeric complexes with EIF4E-EIF4G, which are templates for translation. Its function is as follows. Has RNA-binding and proteolytic activities. Functionally, an RNA-dependent RNA polymerase that plays an essential role in the virus replication. Involved in aphid transmission, cell-to-cell and systemis movement, encapsidation of the viral RNA and in the regulation of viral RNA amplification. The protein is Genome polyprotein of Potato virus Y (strain N) (PVY).